An 88-amino-acid chain; its full sequence is Elongation factor 1-beta (88 aa).

This sequence belongs to the EF-1-beta/EF-1-delta family.

In terms of biological role, promotes the exchange of GDP for GTP in EF-1-alpha/GDP, thus allowing the regeneration of EF-1-alpha/GTP that could then be used to form the ternary complex EF-1-alpha/GTP/AAtRNA. The protein is Elongation factor 1-beta of Halobacterium salinarum (strain ATCC 29341 / DSM 671 / R1).